Reading from the N-terminus, the 625-residue chain is MKYLAGDFDVVVIGAGHAGCEAALASARMGCKTLICTMNLDSIALMACNPNIGGTAKGHLVREIDALGGEMGINIDHTFIQSRMLNTSKGPAVHSLRAQADKKRYSERMKHLLEKEENVVLRQLEVIEIDVEDNEVKGVLTKNGAYFTTKAIILCTGTYLKGKIIIGDIIYSSGPSGLYPANDLSQSLLNLGINLRRFKTGTPARINKRSVDFSKMIEQPGDEKIVPFSFIHNKLDKDQISCYLTYTSEETHKIIHENIHRSPLYNGSIEGVGPRYCPSIEDKIVRFPDKDKHQIFIEPEGENTEELYVGGMSSSLPEDVQIKMYRSVPGLENAEILRTAYAIEYDCIDPQQLDLTLEFKNINGLYGAGQFNGSSGYEEAAAQGLIAGINAVLKIKEKNPLILKRSDAYIGVLIDDLVTKGTNEPYRMMTSRAEYRLLLRQDNADLRLTELGYKVGLVKEDRYNKFLNRKKNVENEIERLRNMQITGKREINEFLLEKGSTELKKPISLYELIKRPELDYFKVEPLDDKRPSLSDDEKEEINIIAKYEGYINKQLEQVEQFKKYEDRLIPKSINYLDIKGLRLEAIQKLEKIKPINIGQASRISGVSPADISVLLIYMERKDREN.

FAD is bound at residue 14–19 (GAGHAG). NAD(+) is bound at residue 273 to 287 (GPRYCPSIEDKIVRF).

Belongs to the MnmG family. As to quaternary structure, homodimer. Heterotetramer of two MnmE and two MnmG subunits. FAD serves as cofactor.

The protein resides in the cytoplasm. Functionally, NAD-binding protein involved in the addition of a carboxymethylaminomethyl (cmnm) group at the wobble position (U34) of certain tRNAs, forming tRNA-cmnm(5)s(2)U34. This chain is tRNA uridine 5-carboxymethylaminomethyl modification enzyme MnmG, found in Clostridium botulinum (strain Okra / Type B1).